The following is a 506-amino-acid chain: Probable cytosol aminopeptidase (506 aa).

Mn(2+) contacts are provided by Lys-278 and Asp-283. Residue Lys-290 is part of the active site. Positions 301, 360, and 362 each coordinate Mn(2+). Arg-364 is a catalytic residue.

Belongs to the peptidase M17 family. It depends on Mn(2+) as a cofactor.

It localises to the cytoplasm. The catalysed reaction is Release of an N-terminal amino acid, Xaa-|-Yaa-, in which Xaa is preferably Leu, but may be other amino acids including Pro although not Arg or Lys, and Yaa may be Pro. Amino acid amides and methyl esters are also readily hydrolyzed, but rates on arylamides are exceedingly low.. The enzyme catalyses Release of an N-terminal amino acid, preferentially leucine, but not glutamic or aspartic acids.. Its function is as follows. Presumably involved in the processing and regular turnover of intracellular proteins. Catalyzes the removal of unsubstituted N-terminal amino acids from various peptides. This Ralstonia nicotianae (strain ATCC BAA-1114 / GMI1000) (Ralstonia solanacearum) protein is Probable cytosol aminopeptidase.